A 132-amino-acid polypeptide reads, in one-letter code: Small ribosomal subunit protein uS8 (132 aa).

It belongs to the universal ribosomal protein uS8 family. As to quaternary structure, part of the 30S ribosomal subunit. Contacts proteins S5 and S12.

In terms of biological role, one of the primary rRNA binding proteins, it binds directly to 16S rRNA central domain where it helps coordinate assembly of the platform of the 30S subunit. This is Small ribosomal subunit protein uS8 from Desulfitobacterium hafniense (strain DSM 10664 / DCB-2).